The following is a 434-amino-acid chain: GTPase Obg (434 aa).

The Obg domain occupies 4-162 (ADFIDRIVIY…RKLVLELKLL (159 aa)). Residues 163-333 (ADVGLVGYPN…IVYKLAEIVK (171 aa)) form the OBG-type G domain. GTP is bound by residues 169–176 (GYPNVGKS), 194–198 (FTTTI), 215–218 (DIPG), 285–288 (NKID), and 314–316 (SII). Residues Ser176 and Thr196 each coordinate Mg(2+). An OCT domain is found at 355 to 434 (LWKELPERFN…VAQRAFEYKE (80 aa)).

This sequence belongs to the TRAFAC class OBG-HflX-like GTPase superfamily. OBG GTPase family. In terms of assembly, monomer. The cofactor is Mg(2+).

The protein localises to the cytoplasm. In terms of biological role, an essential GTPase which binds GTP, GDP and possibly (p)ppGpp with moderate affinity, with high nucleotide exchange rates and a fairly low GTP hydrolysis rate. Plays a role in control of the cell cycle, stress response, ribosome biogenesis and in those bacteria that undergo differentiation, in morphogenesis control. The chain is GTPase Obg from Thermosipho africanus (strain TCF52B).